We begin with the raw amino-acid sequence, 778 residues long: MNILRPPTSSSSSSFPPYPKPVSLTPPVSFTLIHNPINLCSINPPFTNAGRPIFQRSASGTANSSAEDLSSFLGSPSEAYSTHNDQELLFLLRNRKTDEAWAKYVQSTHLPGPTCLSRLVSQLSYQSKPESLTRAQSILTRLRNERQLHRLDANSLGLLAMAAAKSGQTLYAVSVIKSMIRSGYLPHVKAWTAAVASLSASGDDGPEESIKLFIAITRRVKRFGDQSLVGQSRPDTAAFNAVLNACANLGDTDKYWKLFEEMSEWDCEPDVLTYNVMIKLCARVGRKELIVFVLERIIDKGIKVCMTTMHSLVAAYVGFGDLRTAERIVQAMREKRRDLCKVLRECNAEDLKEKEEEEAEDDEDAFEDDEDSGYSARDEVSEEGVVDVFKKLLPNSVDPSGEPPLLPKVFAPDSRIYTTLMKGYMKNGRVADTARMLEAMRRQDDRNSHPDEVTYTTVVSAFVNAGLMDRARQVLAEMARMGVPANRITYNVLLKGYCKQLQIDRAEDLLREMTEDAGIEPDVVSYNIIIDGCILIDDSAGALAFFNEMRTRGIAPTKISYTTLMKAFAMSGQPKLANRVFDEMMNDPRVKVDLIAWNMLVEGYCRLGLIEDAQRVVSRMKENGFYPNVATYGSLANGVSQARKPGDALLLWKEIKERCAVKKKEAPSDSSSDPAPPMLKPDEGLLDTLADICVRAAFFKKALEIIACMEENGIPPNKTKYKKIYVEMHSRMFTSKHASQARIDRRVERKRAAEAFKFWLGLPNSYYGSEWKLGPRED.

The transit peptide at 1 to 65 (MNILRPPTSS…RSASGTANSS (65 aa)) directs the protein to the chloroplast. PPR repeat units lie at residues 235-269 (DTAA…DCEP), 270-304 (DVLT…GIKV), and 305-339 (CMTT…RRDL). Residues 351–381 (LKEKEEEEAEDDEDAFEDDEDSGYSARDEVS) form a disordered region. The span at 355-372 (EEEEAEDDEDAFEDDEDS) shows a compositional bias: acidic residues. PPR repeat units follow at residues 413-443 (DSRI…MRRQ), 451-485 (DEVT…GVPA), 486-521 (NRIT…GIEP), 522-556 (DVVS…GIAP), 557-587 (TKIS…MMND), 593-627 (DLIA…GFYP), and 628-658 (NVAT…IKER).

The protein belongs to the PPR family. P subfamily.

The protein resides in the plastid. It is found in the chloroplast stroma. In terms of biological role, involved in the processing of polycistronic chloroplast psbB-psbT-psbH-petB-petD transcript. Could bind RNA. The protein is Pentatricopeptide repeat-containing protein At3g09650, chloroplastic (HCF152) of Arabidopsis thaliana (Mouse-ear cress).